The primary structure comprises 261 residues: Putative [LysW]-aminoadipate/[LysW]-glutamate kinase (261 aa).

Residues 35–36 (GG), Arg-62, and Asn-162 each bind substrate.

Belongs to the acetylglutamate kinase family. LysZ subfamily.

It localises to the cytoplasm. The catalysed reaction is [amino-group carrier protein]-C-terminal-N-(1,4-dicarboxybutan-1-yl)-L-glutamine + ATP = [amino-group carrier protein]-C-terminal-N-(1-carboxy-5-phosphooxy-5-oxopentan-1-yl)-L-glutamine + ADP. It carries out the reaction [amino-group carrier protein]-C-terminal-gamma-(L-glutamyl)-L-glutamate + ATP = [amino-group carrier protein]-C-terminal-gamma-(5-phospho-L-glutamyl)-L-glutamate + ADP. It participates in amino-acid biosynthesis; L-lysine biosynthesis via AAA pathway; L-lysine from L-alpha-aminoadipate (Thermus route): step 2/5. Its pathway is amino-acid biosynthesis; L-arginine biosynthesis. Its function is as follows. Involved in both the arginine and lysine biosynthetic pathways. Phosphorylates the LysW-bound precursors glutamate (for arginine biosynthesis), respectively alpha-aminoadipate (for lysine biosynthesis). This is Putative [LysW]-aminoadipate/[LysW]-glutamate kinase from Pyrobaculum calidifontis (strain DSM 21063 / JCM 11548 / VA1).